The primary structure comprises 927 residues: BTB/POZ domain-containing protein KCTD19 (927 aa).

A BTB 1 domain is found at N18–T72. S270 is modified (phosphoserine). Residues I399–L486 enclose the BTB 2 domain. The tract at residues V664–A760 is disordered. A compositionally biased stretch (basic and acidic residues) spans D731–P743.

Identified in a complex with ZNF541, HDAC1 and HSPA2. Identified in a complex with ZNF541 and HDAC1. Identified in a complex with HDAC1, HDAC2, DNTTIP1 and ZNF541. Detected in adult testis.

It localises to the nucleus. Its function is as follows. Transcription regulator which is essential for male fertility and for the completion of meiotic prophase in spermatocytes. Regulates progression of the pachytene stage of meiotic prophase and promotes the transcriptional activation activity ZNF541. Required for the organization of chromosomes during metaphase I. This is BTB/POZ domain-containing protein KCTD19 (Kctd19) from Mus musculus (Mouse).